Reading from the N-terminus, the 820-residue chain is Serine/threonine-protein phosphatase 4 regulatory subunit 3-A (820 aa).

The 100-residue stretch at Met1–Val100 folds into the WH1 domain. Acidic residues predominate over residues Glu682 to Glu694. Disordered stretches follow at residues Glu682 to Gly712 and Ala750 to Ser820. Basic and acidic residues predominate over residues Glu701–Gly712. Polar residues-rich tracts occupy residues Ala750–Ser761 and Pro768–Gly790. A compositionally biased stretch (acidic residues) spans Tyr798–Asp809.

This sequence belongs to the SMEK family. As to quaternary structure, serine/threonine-protein phosphatase 4 (PP4) occurs in different assemblies of the catalytic and one or more regulatory subunits.

Functionally, regulatory subunit of serine/threonine-protein phosphatase 4 (PP4). This chain is Serine/threonine-protein phosphatase 4 regulatory subunit 3-A, found in Xenopus laevis (African clawed frog).